The primary structure comprises 458 residues: Estrogen-related receptor gamma (458 aa).

Residue Lys40 forms a Glycyl lysine isopeptide (Lys-Gly) (interchain with G-Cter in SUMO) linkage. Residues 42–52 are compositionally biased toward polar residues; sequence EPSSPASLTDS. Residues 42–85 form a disordered region; that stretch reads EPSSPASLTDSVNHHSPGGSSDASGSYSSTMNGHQNGLDSPPLY. The residue at position 45 (Ser45) is a Phosphoserine. Residues 57–70 show a composition bias toward low complexity; the sequence is SPGGSSDASGSYSS. Residues 125–200 constitute a DNA-binding region (nuclear receptor); that stretch reads KRLCLVCGDI…VGMLKEGVRL (76 aa). NR C4-type zinc fingers lie at residues 128-148 and 164-188; these read CLVC…CEAC and CPAT…FMKC. In terms of domain architecture, NR LBD spans 233–457; it reads PYNKIVSHLL…KLFLEMLEAK (225 aa).

This sequence belongs to the nuclear hormone receptor family. NR3 subfamily. As to quaternary structure, homodimer. Binds TLE1, PNRC1 and PNRC2. Binds GRIP1. Interacts with NRIP1, NCOA1 and NCOR2. In terms of processing, acetylated by PCAF/KAT2 (in vitro). Sumoylation on Lys-40 is enhanced by phosphorylation at Ser-45 and represses transcriptional activity. Post-translationally, phosphorylation on Ser-45 enhances sumoylation on Lys-40 thus repressing transcriptional activity. Expressed in the heart, kidney, brain, lung, bone marrow, adrenal gland, trachea, spinal cord and thyroid gland.

The protein resides in the nucleus. In terms of biological role, orphan receptor that acts as a transcription activator in the absence of bound ligand. Binds specifically to an estrogen response element and activates reporter genes controlled by estrogen response elements. Induces the expression of PERM1 in the skeletal muscle. This chain is Estrogen-related receptor gamma (ESRRG), found in Homo sapiens (Human).